Consider the following 129-residue polypeptide: Follitropin subunit beta (129 aa).

The N-terminal stretch at 1 to 20 is a signal peptide; the sequence is MKSVQFCFLFCCWRAICCRS. Disulfide bonds link C21–C69, C35–C84, C38–C122, C46–C100, C50–C102, and C105–C112. N25 and N42 each carry an N-linked (GlcNAc...) asparagine glycan.

It belongs to the glycoprotein hormones subunit beta family. In terms of assembly, heterodimer. The active follitropin is a heterodimer composed of an alpha chain/CGA shared with other hormones and a unique beta chain/FSHB shown here.

It localises to the secreted. Its function is as follows. Together with the alpha chain CGA constitutes follitropin, the follicle-stimulating hormone, and provides its biological specificity to the hormone heterodimer. Binds FSHR, a G protein-coupled receptor, on target cells to activate downstream signaling pathways. Follitropin is involved in follicle development and spermatogenesis in reproductive organs. This is Follitropin subunit beta (FSHB) from Bos taurus (Bovine).